The following is a 94-amino-acid chain: Co-chaperonin GroES (94 aa).

Belongs to the GroES chaperonin family. Heptamer of 7 subunits arranged in a ring. Interacts with the chaperonin GroEL.

The protein localises to the cytoplasm. Its function is as follows. Together with the chaperonin GroEL, plays an essential role in assisting protein folding. The GroEL-GroES system forms a nano-cage that allows encapsulation of the non-native substrate proteins and provides a physical environment optimized to promote and accelerate protein folding. GroES binds to the apical surface of the GroEL ring, thereby capping the opening of the GroEL channel. This Geobacillus thermodenitrificans (strain NG80-2) protein is Co-chaperonin GroES.